Here is a 390-residue protein sequence, read N- to C-terminus: Two-component response regulator ORR29 (390 aa).

Positions 13–130 (SAMVIDEDKC…TIKNLWQYVD (118 aa)) constitute a Response regulatory domain. Aspartate 65 bears the 4-aspartylphosphate mark. A DNA-binding region (myb-like GARP) is located at residues 169–226 (KKYYLMWTPHLQKKFLHALQILGKDASPKNIKKIMGVDNIDCRQIAAHLQKHRLRLTK). Disordered regions lie at residues 233–271 (FTTD…QPTE) and 303–339 (SKHS…SGDH). The segment covering 257-271 (NASTLQPRSNTQPTE) has biased composition (polar residues).

This sequence belongs to the ARR family. Type-B subfamily. In terms of processing, two-component system major event consists of a His-to-Asp phosphorelay between a sensor histidine kinase (HK) and a response regulator (RR). In plants, the His-to-Asp phosphorelay involves an additional intermediate named Histidine-containing phosphotransfer protein (HPt). This multistep phosphorelay consists of a His-Asp-His-Asp sequential transfer of a phosphate group between first a His and an Asp of the HK protein, followed by the transfer to a conserved His of the HPt protein and finally the transfer to an Asp in the receiver domain of the RR protein.

Its subcellular location is the cytoplasm. It localises to the cytosol. It is found in the nucleus. Its function is as follows. Transcriptional activator that binds specific DNA sequence. Functions as a response regulator involved in His-to-Asp phosphorelay signal transduction system. Phosphorylation of the Asp residue in the receiver domain activates the ability of the protein to promote the transcription of target genes. May directly activate some type-A response regulators in response to cytokinins. Functions as a response regulator in response to cytokinins. The chain is Two-component response regulator ORR29 from Oryza sativa subsp. japonica (Rice).